The primary structure comprises 298 residues: N-acetylmuramic acid 6-phosphate etherase (298 aa).

An SIS domain is found at 54 to 217 (TIKAMKQGGR…STTVMIGLGK (164 aa)). Residue glutamate 82 is the Proton donor of the active site. The active site involves glutamate 113.

Belongs to the GCKR-like family. MurNAc-6-P etherase subfamily. As to quaternary structure, homodimer.

It catalyses the reaction N-acetyl-D-muramate 6-phosphate + H2O = N-acetyl-D-glucosamine 6-phosphate + (R)-lactate. It functions in the pathway amino-sugar metabolism; N-acetylmuramate degradation. In terms of biological role, specifically catalyzes the cleavage of the D-lactyl ether substituent of MurNAc 6-phosphate, producing GlcNAc 6-phosphate and D-lactate. This chain is N-acetylmuramic acid 6-phosphate etherase, found in Halalkalibacterium halodurans (strain ATCC BAA-125 / DSM 18197 / FERM 7344 / JCM 9153 / C-125) (Bacillus halodurans).